The sequence spans 409 residues: Mitochondrial protein import protein MAS5 (409 aa).

The interval 1–172 (MVKETKFYDI…NGQGIKFVTR (172 aa)) is necessary for HAP1 repression in the absence of heme. In terms of domain architecture, J spans 4–72 (ETKFYDILGV…RDIYDQFGED (69 aa)). Substrate contacts are provided by residues isoleucine 116 and 135-137 (LAL). The CR-type zinc finger occupies 130–213 (GRTAKLALNK…CNGKKVENER (84 aa)). The Zn(2+) site is built by cysteine 143, cysteine 146, cysteine 159, cysteine 162, cysteine 185, and cysteine 188. 3 CXXCXGXG motif repeats span residues 143-150 (CKECEGRG), 159-166 (CTSCNGQG), and 185-192 (CDVCHGTG). Residue lysine 198 forms a Glycyl lysine isopeptide (Lys-Gly) (interchain with G-Cter in ubiquitin) linkage. The Zn(2+) site is built by cysteine 201 and cysteine 204. Residues 201–208 (CKSCNGKK) form a CXXCXGXG motif repeat. Substrate contacts are provided by residues 215-216 (IL) and 247-249 (VVF). The interval 382–409 (RTRASRGGANYDSDEEEQGGEGVQCASQ) is disordered. Cysteine methyl ester is present on cysteine 406. A lipid anchor (S-farnesyl cysteine) is attached at cysteine 406. Residues 407–409 (ASQ) constitute a propeptide, removed in mature form.

In terms of assembly, homodimer. Interacts with HAP1. Component of the HMC including HAP1, SRO9 and YDJ1.

The protein resides in the cytoplasm. It localises to the perinuclear region. Its function is as follows. Probably involved in mitochondrial protein import. Is also required for efficient translocation of pre-pro-alpha-factor. Involved in heme regulation of HAP1, as a component of the high-molecular-weight (HMC) complex. The chain is Mitochondrial protein import protein MAS5 (YDJ1) from Saccharomyces cerevisiae (strain ATCC 204508 / S288c) (Baker's yeast).